Consider the following 308-residue polypeptide: ADP-L-glycero-D-manno-heptose-6-epimerase (308 aa).

Residues 10-11, 31-32, lysine 38, lysine 53, 75-79, and asparagine 92 contribute to the NADP(+) site; these read MI, DN, and EGACS. Tyrosine 140 (proton acceptor) is an active-site residue. Residue lysine 144 coordinates NADP(+). Substrate is bound at residue asparagine 169. Valine 170 and lysine 178 together coordinate NADP(+). The active-site Proton acceptor is the lysine 178. Substrate-binding positions include serine 180, histidine 187, 201–204, arginine 209, and tyrosine 272; that span reads FEGS.

It belongs to the NAD(P)-dependent epimerase/dehydratase family. HldD subfamily. Homopentamer. NADP(+) is required as a cofactor.

The catalysed reaction is ADP-D-glycero-beta-D-manno-heptose = ADP-L-glycero-beta-D-manno-heptose. Its pathway is nucleotide-sugar biosynthesis; ADP-L-glycero-beta-D-manno-heptose biosynthesis; ADP-L-glycero-beta-D-manno-heptose from D-glycero-beta-D-manno-heptose 7-phosphate: step 4/4. Functionally, catalyzes the interconversion between ADP-D-glycero-beta-D-manno-heptose and ADP-L-glycero-beta-D-manno-heptose via an epimerization at carbon 6 of the heptose. The protein is ADP-L-glycero-D-manno-heptose-6-epimerase of Actinobacillus pleuropneumoniae serotype 5b (strain L20).